We begin with the raw amino-acid sequence, 75 residues long: UPF0352 protein YejL (75 aa).

Belongs to the UPF0352 family.

The protein is UPF0352 protein YejL of Shigella sonnei (strain Ss046).